The primary structure comprises 371 residues: MAHRVLLLLSLASAAAVAAAVDAEDPLIRQVVPGGDDNDLELNAESHFLSFVQRFGKSYKDADEHAYRLSVFKDNLRRARRHQLLDPSAEHGVTKFSDLTPAEFRRTYLGLRKSRRALLRELGESAHEAPVLPTDGLPDDFDWRDHGAVGPVKNQGSCGSCWSFSASGALEGAHYLATGKLEVLSEQQFVDCDHECDSSEPDSCDSGCNGGLMTTAFSYLQKAGGLESEKDYPYTGSDGKCKFDKSKIVASVQNFSVVSVDEAQISANLIKHGPLAIGINAAYMQTYIGGVSCPYICGRHLDHGVLLVGYGASGFAPIRLKDKPYWIIKNSWGENWGENGYYKICRGSNVRNKCGVDSMVSTVSAVHASKE.

The signal sequence occupies residues 1-18 (MAHRVLLLLSLASAAAVA). Positions 19–136 (AAVDAEDPLI…HEAPVLPTDG (118 aa)) are cleaved as a propeptide — activation peptide. 2 cysteine pairs are disulfide-bonded: Cys158–Cys208 and Cys192–Cys241. Cys161 is an active-site residue. The N-linked (GlcNAc...) asparagine glycan is linked to Asn254. Cys297 and Cys354 are disulfide-bonded. Residues His303 and Asn330 contribute to the active site.

It belongs to the peptidase C1 family. In terms of tissue distribution, expressed during the late stages of seed ripening, in mature seeds and during germination.

In terms of biological role, involved in the degradation of the storage protein zein. May play a role in proteolysis during emergencies. The protein is Cysteine proteinase 1 (CCP1) of Zea mays (Maize).